We begin with the raw amino-acid sequence, 64 residues long: Conotoxin Im11.4 (64 aa).

A signal peptide spans 1–26 (MMFRLTSVSCILLVIAFLNLVGLTNA). 4 disulfide bridges follow: Cys27–Cys41, Cys34–Cys46, Cys40–Cys50, and Cys45–Cys54. The residue at position 57 (His57) is a Histidine amide. Residues 61-64 (ATFQ) constitute a propeptide that is removed on maturation.

Belongs to the conotoxin I2 superfamily. In terms of tissue distribution, expressed by the venom duct.

It localises to the secreted. This Conus imperialis (Imperial cone) protein is Conotoxin Im11.4.